The following is a 54-amino-acid chain: Small ribosomal subunit protein uS14 (54 aa).

Positions 19, 22, 37, and 40 each coordinate Zn(2+).

Belongs to the universal ribosomal protein uS14 family. Zinc-binding uS14 subfamily. Part of the 30S ribosomal subunit. It depends on Zn(2+) as a cofactor.

Binds 16S rRNA, required for the assembly of 30S particles. The sequence is that of Small ribosomal subunit protein uS14 from Pyrobaculum aerophilum (strain ATCC 51768 / DSM 7523 / JCM 9630 / CIP 104966 / NBRC 100827 / IM2).